We begin with the raw amino-acid sequence, 91 residues long: Small ribosomal subunit protein uS15c (91 aa).

Belongs to the universal ribosomal protein uS15 family. As to quaternary structure, part of the 30S ribosomal subunit.

The protein resides in the plastid. It is found in the chloroplast. The sequence is that of Small ribosomal subunit protein uS15c (rps15) from Adiantum capillus-veneris (Maidenhair fern).